The chain runs to 72 residues: Heat-stable enterotoxin A2 (72 aa).

The N-terminal stretch at 1 to 19 is a signal peptide; that stretch reads MKKSILFIFLSVLSFSPFA. Residues 20–53 constitute a propeptide that is removed on maturation; the sequence is QDAKPAGSSKEKITLESKKCNIVKKNNESSPESM. Disulfide bonds link C59/C64, C60/C68, and C63/C71.

It belongs to the heat-stable enterotoxin family.

It localises to the secreted. In terms of biological role, toxin which activates the particulate form of guanylate cyclase and increases cyclic GMP levels within the host intestinal epithelial cells. This chain is Heat-stable enterotoxin A2 (sta2), found in Escherichia coli.